The chain runs to 120 residues: Large ribosomal subunit protein uL18 (120 aa).

It belongs to the universal ribosomal protein uL18 family. As to quaternary structure, part of the 50S ribosomal subunit; part of the 5S rRNA/L5/L18/L25 subcomplex. Contacts the 5S and 23S rRNAs.

Functionally, this is one of the proteins that bind and probably mediate the attachment of the 5S RNA into the large ribosomal subunit, where it forms part of the central protuberance. The polypeptide is Large ribosomal subunit protein uL18 (Finegoldia magna (strain ATCC 29328 / DSM 20472 / WAL 2508) (Peptostreptococcus magnus)).